We begin with the raw amino-acid sequence, 1381 residues long: Hepatocyte growth factor receptor (1381 aa).

The N-terminal stretch at 1–24 (MKAPTVLAPGILVLLFTLVQKSNG) is a signal peptide. Over 25 to 933 (ECREALAKSE…VIVQSDQSFT (909 aa)) the chain is Extracellular. One can recognise a Sema domain in the interval 27-516 (REALAKSEMN…TGKKITRIPL (490 aa)). N45, N100, and N106 each carry an N-linked (GlcNAc...) asparagine glycan. Cystine bridges form between C95–C101, C98–C160, C133–C141, and C173–C176. N-linked (GlcNAc...) asparagine glycosylation is found at N203 and N359. 2 cysteine pairs are disulfide-bonded: C299–C364 and C386–C398. N-linked (GlcNAc...) asparagine glycosylation is found at N400 and N406. 4 disulfide bridges follow: C521/C539, C527/C562, C530/C546, and C542/C552. A glycan (N-linked (GlcNAc...) asparagine) is linked at N554. 3 consecutive IPT/TIG domains span residues 564-656 (PTVY…FSYV), 658-740 (PIIT…FSYR), and 743-837 (PIVY…LIYV). T583 carries O-linked (Man) threonine glycosylation. N-linked (GlcNAc...) asparagine glycans are attached at residues N608 and N636. T677 and T762 each carry an O-linked (Man) threonine glycan. 2 N-linked (GlcNAc...) asparagine glycosylation sites follow: N786 and N880. The helical transmembrane segment at 934 to 956 (GVIVGVVAISIILLLLLGLFLWL) threads the bilayer. The Cytoplasmic portion of the chain corresponds to 957 to 1381 (KKKKQIKDLG…QDDLDGEVDT (425 aa)). Residue S967 is modified to Phosphoserine. Residue T978 is modified to Phosphothreonine. 3 positions are modified to phosphoserine: S991, S998, and S1001. Position 1004 is a phosphotyrosine (Y1004). The 268-residue stretch at 1079-1346 (VHFNEVIGRG…RISAIFSTFI (268 aa)) folds into the Protein kinase domain. Residues 1085-1093 (IGRGHFGCV) and K1111 each bind ATP. The active-site Proton acceptor is D1205. The segment at 1213-1381 (LDEKFTVKVA…QDDLDGEVDT (169 aa)) is interaction with RANBP9. Y1231 is subject to Phosphotyrosine. A phosphotyrosine; by autocatalysis mark is found at Y1235 and Y1236. T1290 bears the Phosphothreonine mark. An interaction with MUC20 region spans residues 1321–1360 (WHPKAEMRPSFSELVSRISAIFSTFIGEHYVHVNATYVNV). A phosphotyrosine; by autocatalysis mark is found at Y1350 and Y1357. Position 1366 is a phosphotyrosine (Y1366).

This sequence belongs to the protein kinase superfamily. Tyr protein kinase family. As to quaternary structure, heterodimer made of an alpha chain (50 kDa) and a beta chain (145 kDa) which are disulfide linked. Binds PLXNB1. Interacts when phosphorylated with downstream effectors including STAT3, PIK3R1, SRC, PCLG1, GRB2 and GAB1. Interacts with SPSB1, SPSB2 and SPSB4. Interacts with INPP5D/SHIP1. When phosphorylated at Tyr-1357, interacts with INPPL1/SHIP2. Interacts with RANBP9 and RANBP10, as well as SPSB1, SPSB2, SPSB3 and SPSB4. SPSB1 binding occurs in the presence and in the absence of HGF, however HGF treatment has a positive effect on this interaction. Interacts with MUC20; prevents interaction with GRB2 and suppresses hepatocyte growth factor-induced cell proliferation. Interacts with GRB10. Interacts with PTPN1 and PTPN2. Interacts with HSP90AA1 and HSP90AB1; the interaction suppresses MET kinase activity. Interacts with tensin TNS3. Interacts (when phosphorylated) with tensin TNS4 (via SH2 domain); the interaction increases MET protein stability by inhibiting MET endocytosis and subsequent lysosomal degradation. Post-translationally, autophosphorylated in response to ligand binding on Tyr-1235 and Tyr-1236 in the kinase domain leading to further phosphorylation of Tyr-1350 and Tyr-1357 in the C-terminal multifunctional docking site. Dephosphorylated by PTPRJ at Tyr-1350 and Tyr-1366. Dephosphorylated by PTPN1 and PTPN2. In terms of processing, ubiquitinated. Ubiquitination by CBL regulates the receptor stability and activity through proteasomal degradation. O-mannosylation of IPT/TIG domains by TMEM260 is required for protein maturation. O-mannosylated residues are composed of single mannose glycans that are not elongated or modified.

It localises to the membrane. The enzyme catalyses L-tyrosyl-[protein] + ATP = O-phospho-L-tyrosyl-[protein] + ADP + H(+). In its inactive state, the C-terminal tail interacts with the catalytic domain and inhibits the kinase activity. Upon ligand binding, the C-terminal tail is displaced and becomes phosphorylated, thus increasing the kinase activity. Its function is as follows. Receptor tyrosine kinase that transduces signals from the extracellular matrix into the cytoplasm by binding to hepatocyte growth factor/HGF ligand. Regulates many physiological processes including proliferation, scattering, morphogenesis and survival. Ligand binding at the cell surface induces autophosphorylation of MET on its intracellular domain that provides docking sites for downstream signaling molecules. Following activation by ligand, interacts with the PI3-kinase subunit PIK3R1, PLCG1, SRC, GRB2, STAT3 or the adapter GAB1. Recruitment of these downstream effectors by MET leads to the activation of several signaling cascades including the RAS-ERK, PI3 kinase-AKT, or PLCgamma-PKC. The RAS-ERK activation is associated with the morphogenetic effects while PI3K/AKT coordinates prosurvival effects. During embryonic development, MET signaling plays a role in gastrulation, development and migration of muscles and neuronal precursors, angiogenesis and kidney formation. In adults, participates in wound healing as well as organ regeneration and tissue remodeling. Also promotes differentiation and proliferation of hematopoietic cells. The polypeptide is Hepatocyte growth factor receptor (MET) (Dasypus novemcinctus (Nine-banded armadillo)).